A 438-amino-acid polypeptide reads, in one-letter code: tRNA-dihydrouridine(16/17) synthase [NAD(P)(+)]-like (438 aa).

FMN contacts are provided by residues 23 to 25 (PMV) and Gln-79. The active-site Proton donor is the Cys-108. FMN-binding positions include Lys-147, His-175, 208-210 (NGN), and 232-233 (AE). The tract at residues 343–387 (GPKEGSKENSSGRSKRALEEEEGSMEGLSKNKLKKQLRNPHKTFD) is disordered. The segment covering 373–383 (NKLKKQLRNPH) has biased composition (basic residues).

It belongs to the Dus family. Dus1 subfamily. The cofactor is FMN.

It localises to the cytoplasm. Its subcellular location is the nucleus. It catalyses the reaction 5,6-dihydrouridine(16) in tRNA + NADP(+) = uridine(16) in tRNA + NADPH + H(+). The enzyme catalyses 5,6-dihydrouridine(16) in tRNA + NAD(+) = uridine(16) in tRNA + NADH + H(+). It carries out the reaction 5,6-dihydrouridine(17) in tRNA + NAD(+) = uridine(17) in tRNA + NADH + H(+). The catalysed reaction is 5,6-dihydrouridine(17) in tRNA + NADP(+) = uridine(17) in tRNA + NADPH + H(+). Catalyzes the synthesis of dihydrouridine, a modified base found in the D-loop of most tRNAs. Specifically modifies U16 and U17 in cytoplasmic tRNAs. Affects the level of some mature tRNA and thereby the total cellular translation. The chain is tRNA-dihydrouridine(16/17) synthase [NAD(P)(+)]-like (Dus1l) from Rattus norvegicus (Rat).